A 506-amino-acid polypeptide reads, in one-letter code: MGLPWYRVHTVVLNDPGRLLSVHIMHTALVAGWAGSMALYELAVFDPSDPVLDPMWRQGMFVIPFMTRLGITNSWGGWSITGGTITNPGIWSYEGVAGAHILFSGLCFLAAIWHWVYWDLEIFSDERTGKPSLDLPKIFGIHLFLSGLGCFGFGAFHVTGLYGPGIWVSDPYGLTGRVQAVNPAWGVEGFDPFVPGGIASHHIAAGTLGILAGLFHLSVRPPQRLYKGLRMGNIETVLSSSIAAVFFAAFVVAGTMWYGSATTPIELFGPTRYQWDQGYFQQEIYRRVSTGLAENQSLSEAWSKIPEKLAFYDYIGNNPAKGGLFRAGSMDNGDGIAVGWLGHPVFRDKEGRELFVRRMPTFFETFPVVLVDGDGIVRADVPFRRAESKYSVEQVGVTVEFYGGELNGVSYSDPATVKKYARRAQLGEIFELDRATLKSDGVFRSSPRGWFTFGHASFALLFFFGHIWHGARTLFRDVFAGIDPDLDTQVEFGAFQKLGDPTTKRV.

Transmembrane regions (helical) follow at residues 21 to 36 (SVHI…WAGS), 101 to 115 (ILFS…IWHW), 140 to 156 (GIHL…FGAF), 203 to 218 (IAAG…FHLS), 237 to 252 (VLSS…AFVV), and 457 to 472 (SFAL…HGAR).

The protein belongs to the PsbB/PsbC family. PsbB subfamily. PSII is composed of 1 copy each of membrane proteins PsbA, PsbB, PsbC, PsbD, PsbE, PsbF, PsbH, PsbI, PsbJ, PsbK, PsbL, PsbM, PsbT, PsbX, PsbY, PsbZ, Psb30/Ycf12, at least 3 peripheral proteins of the oxygen-evolving complex and a large number of cofactors. It forms dimeric complexes. Binds multiple chlorophylls. PSII binds additional chlorophylls, carotenoids and specific lipids. is required as a cofactor.

The protein localises to the plastid. Its subcellular location is the chloroplast thylakoid membrane. One of the components of the core complex of photosystem II (PSII). It binds chlorophyll and helps catalyze the primary light-induced photochemical processes of PSII. PSII is a light-driven water:plastoquinone oxidoreductase, using light energy to abstract electrons from H(2)O, generating O(2) and a proton gradient subsequently used for ATP formation. This chain is Photosystem II CP47 reaction center protein, found in Cucumis sativus (Cucumber).